The chain runs to 148 residues: Deoxyuridine 5'-triphosphate nucleotidohydrolase (148 aa).

Substrate-binding positions include 67–69 (RSG), Asn-80, 84–86 (LID), and Met-94.

The protein belongs to the dUTPase family. Mg(2+) serves as cofactor.

It carries out the reaction dUTP + H2O = dUMP + diphosphate + H(+). It functions in the pathway pyrimidine metabolism; dUMP biosynthesis; dUMP from dCTP (dUTP route): step 2/2. Its function is as follows. This enzyme is involved in nucleotide metabolism: it produces dUMP, the immediate precursor of thymidine nucleotides and it decreases the intracellular concentration of dUTP so that uracil cannot be incorporated into DNA. This chain is Deoxyuridine 5'-triphosphate nucleotidohydrolase, found in Burkholderia cenocepacia (strain ATCC BAA-245 / DSM 16553 / LMG 16656 / NCTC 13227 / J2315 / CF5610) (Burkholderia cepacia (strain J2315)).